The sequence spans 122 residues: Large ribosomal subunit protein uL14 (122 aa).

This sequence belongs to the universal ribosomal protein uL14 family. As to quaternary structure, part of the 50S ribosomal subunit. Forms a cluster with proteins L3 and L19. In the 70S ribosome, L14 and L19 interact and together make contacts with the 16S rRNA in bridges B5 and B8.

In terms of biological role, binds to 23S rRNA. Forms part of two intersubunit bridges in the 70S ribosome. This Caldicellulosiruptor saccharolyticus (strain ATCC 43494 / DSM 8903 / Tp8T 6331) protein is Large ribosomal subunit protein uL14.